A 272-amino-acid chain; its full sequence is Ribosomal RNA small subunit methyltransferase A (272 aa).

Residues N16, L18, G43, E64, D89, and N110 each contribute to the S-adenosyl-L-methionine site.

The protein belongs to the class I-like SAM-binding methyltransferase superfamily. rRNA adenine N(6)-methyltransferase family. RsmA subfamily.

The protein resides in the cytoplasm. The enzyme catalyses adenosine(1518)/adenosine(1519) in 16S rRNA + 4 S-adenosyl-L-methionine = N(6)-dimethyladenosine(1518)/N(6)-dimethyladenosine(1519) in 16S rRNA + 4 S-adenosyl-L-homocysteine + 4 H(+). In terms of biological role, specifically dimethylates two adjacent adenosines (A1518 and A1519) in the loop of a conserved hairpin near the 3'-end of 16S rRNA in the 30S particle. May play a critical role in biogenesis of 30S subunits. In Pseudomonas fluorescens (strain Pf0-1), this protein is Ribosomal RNA small subunit methyltransferase A.